A 394-amino-acid polypeptide reads, in one-letter code: L-lactate dehydrogenase (394 aa).

An FMN hydroxy acid dehydrogenase domain is found at 1 to 380; it reads MIISAASDYR…SRDSLVQNAE (380 aa). Substrate is bound at residue Tyr-24. FMN contacts are provided by Ser-106 and Gln-127. A substrate-binding site is contributed by Tyr-129. FMN is bound at residue Thr-155. Arg-164 provides a ligand contact to substrate. Lys-251 contacts FMN. His-275 (proton acceptor) is an active-site residue. Arg-278 lines the substrate pocket. 306–330 contacts FMN; sequence DSGIRNGLDVVRMIALGADSVLLGR.

Belongs to the FMN-dependent alpha-hydroxy acid dehydrogenase family. FMN serves as cofactor.

The protein localises to the cell inner membrane. It catalyses the reaction (S)-lactate + A = pyruvate + AH2. Catalyzes the conversion of L-lactate to pyruvate. Is coupled to the respiratory chain. In Klebsiella pneumoniae (strain 342), this protein is L-lactate dehydrogenase.